The chain runs to 156 residues: Large ribosomal subunit protein uL30 (156 aa).

It belongs to the universal ribosomal protein uL30 family. In terms of assembly, part of the 50S ribosomal subunit.

In Sulfolobus acidocaldarius (strain ATCC 33909 / DSM 639 / JCM 8929 / NBRC 15157 / NCIMB 11770), this protein is Large ribosomal subunit protein uL30.